Reading from the N-terminus, the 360-residue chain is Blue-light-activated histidine kinase 1 (360 aa).

The PAS domain occupies 38–109 (LFLETTQQTR…KLREGIAAER (72 aa)). Cys85 bears the S-4a-FMN cysteine mark. Residues 109–163 (RYTVVDLLNYRKDGIPFWNAVHVGPIYGEDGTLQYFYGSQWDITDIVAERRKAET) enclose the PAC domain. A Phosphohistidine; by autocatalysis modification is found at His173. Positions 260-303 (RSVTALGLALHELATNAVKYGALSVDAGRVEISWSREDGDVTLV) are HWE histidine kinase domain.

FMN binds covalently to cysteine after exposure to blue light and this bond is spontaneously broken in the dark.

The enzyme catalyses ATP + protein L-histidine = ADP + protein N-phospho-L-histidine.. In terms of biological role, photosensitive kinase that is involved in increased bacterial virulence upon exposure to light. The chain is Blue-light-activated histidine kinase 1 from Erythrobacter litoralis (strain HTCC2594).